The primary structure comprises 486 residues: Bifunctional protein HldE (486 aa).

A ribokinase region spans residues 1 to 331; that stretch reads MSTNVADLLH…NALTAESVPV (331 aa). 207 to 210 is a binding site for ATP; it reads NLGE. Asp-276 is a catalytic residue. A cytidylyltransferase region spans residues 358–486; it reads VTNGCFDLLH…STTKLIEKGH (129 aa).

The protein in the N-terminal section; belongs to the carbohydrate kinase PfkB family. This sequence in the C-terminal section; belongs to the cytidylyltransferase family. In terms of assembly, homodimer.

It catalyses the reaction D-glycero-beta-D-manno-heptose 7-phosphate + ATP = D-glycero-beta-D-manno-heptose 1,7-bisphosphate + ADP + H(+). The catalysed reaction is D-glycero-beta-D-manno-heptose 1-phosphate + ATP + H(+) = ADP-D-glycero-beta-D-manno-heptose + diphosphate. Its pathway is nucleotide-sugar biosynthesis; ADP-L-glycero-beta-D-manno-heptose biosynthesis; ADP-L-glycero-beta-D-manno-heptose from D-glycero-beta-D-manno-heptose 7-phosphate: step 1/4. The protein operates within nucleotide-sugar biosynthesis; ADP-L-glycero-beta-D-manno-heptose biosynthesis; ADP-L-glycero-beta-D-manno-heptose from D-glycero-beta-D-manno-heptose 7-phosphate: step 3/4. Functionally, catalyzes the phosphorylation of D-glycero-D-manno-heptose 7-phosphate at the C-1 position to selectively form D-glycero-beta-D-manno-heptose-1,7-bisphosphate. Catalyzes the ADP transfer from ATP to D-glycero-beta-D-manno-heptose 1-phosphate, yielding ADP-D-glycero-beta-D-manno-heptose. The polypeptide is Bifunctional protein HldE (Koribacter versatilis (strain Ellin345)).